A 622-amino-acid polypeptide reads, in one-letter code: 1-deoxy-D-xylulose-5-phosphate synthase (622 aa).

Residues histidine 80 and 121–123 (GHS) each bind thiamine diphosphate. Aspartate 152 is a Mg(2+) binding site. Residues 153–154 (GA), asparagine 181, tyrosine 288, and glutamate 370 contribute to the thiamine diphosphate site. Asparagine 181 is a Mg(2+) binding site.

The protein belongs to the transketolase family. DXPS subfamily. Homodimer. Mg(2+) is required as a cofactor. Thiamine diphosphate serves as cofactor.

The catalysed reaction is D-glyceraldehyde 3-phosphate + pyruvate + H(+) = 1-deoxy-D-xylulose 5-phosphate + CO2. It participates in metabolic intermediate biosynthesis; 1-deoxy-D-xylulose 5-phosphate biosynthesis; 1-deoxy-D-xylulose 5-phosphate from D-glyceraldehyde 3-phosphate and pyruvate: step 1/1. In terms of biological role, catalyzes the acyloin condensation reaction between C atoms 2 and 3 of pyruvate and glyceraldehyde 3-phosphate to yield 1-deoxy-D-xylulose-5-phosphate (DXP). This Hamiltonella defensa subsp. Acyrthosiphon pisum (strain 5AT) protein is 1-deoxy-D-xylulose-5-phosphate synthase.